A 277-amino-acid polypeptide reads, in one-letter code: UPF0276 protein PP_0992 (277 aa).

The protein belongs to the UPF0276 family.

This Pseudomonas putida (strain ATCC 47054 / DSM 6125 / CFBP 8728 / NCIMB 11950 / KT2440) protein is UPF0276 protein PP_0992.